The chain runs to 201 residues: Probable nicotinate-nucleotide adenylyltransferase (201 aa).

Belongs to the NadD family.

It catalyses the reaction nicotinate beta-D-ribonucleotide + ATP + H(+) = deamido-NAD(+) + diphosphate. Its pathway is cofactor biosynthesis; NAD(+) biosynthesis; deamido-NAD(+) from nicotinate D-ribonucleotide: step 1/1. In terms of biological role, catalyzes the reversible adenylation of nicotinate mononucleotide (NaMN) to nicotinic acid adenine dinucleotide (NaAD). The polypeptide is Probable nicotinate-nucleotide adenylyltransferase (Neisseria meningitidis serogroup C / serotype 2a (strain ATCC 700532 / DSM 15464 / FAM18)).